The following is a 238-amino-acid chain: Ribonuclease PH (238 aa).

Phosphate-binding positions include Arg86 and 124 to 126 (GTR).

The protein belongs to the RNase PH family. In terms of assembly, homohexameric ring arranged as a trimer of dimers.

It carries out the reaction tRNA(n+1) + phosphate = tRNA(n) + a ribonucleoside 5'-diphosphate. In terms of biological role, phosphorolytic 3'-5' exoribonuclease that plays an important role in tRNA 3'-end maturation. Removes nucleotide residues following the 3'-CCA terminus of tRNAs; can also add nucleotides to the ends of RNA molecules by using nucleoside diphosphates as substrates, but this may not be physiologically important. Probably plays a role in initiation of 16S rRNA degradation (leading to ribosome degradation) during starvation. The sequence is that of Ribonuclease PH from Rhizobium rhizogenes (strain K84 / ATCC BAA-868) (Agrobacterium radiobacter).